Reading from the N-terminus, the 142-residue chain is Alpha-lactalbumin (142 aa).

The signal sequence occupies residues 1-18 (MMSFVSLLLVGILFHATQ). In terms of domain architecture, C-type lysozyme spans 20-142 (EQLTKCEVFR…KLDQWLCEKL (123 aa)). Cystine bridges form between cysteine 25-cysteine 139, cysteine 47-cysteine 130, cysteine 80-cysteine 96, and cysteine 92-cysteine 110. N-linked (GlcNAc...) asparagine glycans are attached at residues asparagine 64 and asparagine 93. Residues lysine 98, aspartate 101, aspartate 103, aspartate 106, and aspartate 107 each coordinate Ca(2+).

Belongs to the glycosyl hydrolase 22 family. Lactose synthase (LS) is a heterodimer of a catalytic component, beta1,4-galactosyltransferase (beta4Gal-T1) and a regulatory component, alpha-lactalbumin (LA). In terms of tissue distribution, mammary gland specific. Secreted in milk.

Its subcellular location is the secreted. Functionally, regulatory subunit of lactose synthase, changes the substrate specificity of galactosyltransferase in the mammary gland making glucose a good acceptor substrate for this enzyme. This enables LS to synthesize lactose, the major carbohydrate component of milk. In other tissues, galactosyltransferase transfers galactose onto the N-acetylglucosamine of the oligosaccharide chains in glycoproteins. This chain is Alpha-lactalbumin (LALBA), found in Bubalus bubalis (Domestic water buffalo).